The following is a 651-amino-acid chain: L-aspartate oxidase, chloroplastic (651 aa).

A chloroplast-targeting transit peptide spans 1-74 (MAAHVSTGNI…PISETSKPIR (74 aa)). FAD is bound by residues 92-95 (SGVA), K114, 121-128 (NTNYAQGG), and D292. The active-site Proton donor/acceptor is the R368. FAD is bound by residues E453 and 469-470 (SL).

Belongs to the FAD-dependent oxidoreductase 2 family. NadB subfamily. Interacts in vitro with QS. FAD serves as cofactor.

Its subcellular location is the plastid. The protein resides in the chloroplast. It carries out the reaction L-aspartate + O2 = iminosuccinate + H2O2. It participates in cofactor biosynthesis; NAD(+) biosynthesis; iminoaspartate from L-aspartate (oxidase route): step 1/1. Its function is as follows. Catalyzes the oxidation of L-aspartate to iminoaspartate. Can complement nadB-deficient E.coli mutant. Plays a role in stomatal immunity. This chain is L-aspartate oxidase, chloroplastic, found in Arabidopsis thaliana (Mouse-ear cress).